We begin with the raw amino-acid sequence, 397 residues long: Elongation factor Tu (397 aa).

One can recognise a tr-type G domain in the interval 10-206; it reads KPHVNIGTIG…HIDTYIPEPT (197 aa). Residues 19 to 26 form a G1 region; it reads GHVDHGKT. 19 to 26 is a binding site for GTP; it reads GHVDHGKT. Threonine 26 contributes to the Mg(2+) binding site. The interval 61–65 is G2; sequence GITIS. The interval 82–85 is G3; sequence DCPG. Residues 82–86 and 137–140 each bind GTP; these read DCPGH and NKCD. Residues 137–140 are G4; the sequence is NKCD. The tract at residues 175–177 is G5; sequence SAL.

It belongs to the TRAFAC class translation factor GTPase superfamily. Classic translation factor GTPase family. EF-Tu/EF-1A subfamily. As to quaternary structure, monomer.

The protein localises to the cytoplasm. It carries out the reaction GTP + H2O = GDP + phosphate + H(+). Its function is as follows. GTP hydrolase that promotes the GTP-dependent binding of aminoacyl-tRNA to the A-site of ribosomes during protein biosynthesis. This is Elongation factor Tu from Alkaliphilus oremlandii (strain OhILAs) (Clostridium oremlandii (strain OhILAs)).